The primary structure comprises 144 residues: Nucleoside diphosphate kinase (144 aa).

Lysine 11, phenylalanine 59, arginine 87, threonine 93, arginine 104, and asparagine 114 together coordinate ATP. Histidine 117 acts as the Pros-phosphohistidine intermediate in catalysis.

It belongs to the NDK family. As to quaternary structure, homotetramer. Requires Mg(2+) as cofactor.

The protein localises to the cytoplasm. The enzyme catalyses a 2'-deoxyribonucleoside 5'-diphosphate + ATP = a 2'-deoxyribonucleoside 5'-triphosphate + ADP. It carries out the reaction a ribonucleoside 5'-diphosphate + ATP = a ribonucleoside 5'-triphosphate + ADP. Major role in the synthesis of nucleoside triphosphates other than ATP. The ATP gamma phosphate is transferred to the NDP beta phosphate via a ping-pong mechanism, using a phosphorylated active-site intermediate. This Aliivibrio fischeri (strain ATCC 700601 / ES114) (Vibrio fischeri) protein is Nucleoside diphosphate kinase.